The sequence spans 221 residues: Large ribosomal subunit protein uL4 (221 aa).

Residues 48–77 (TASTKTRGEVSGGGRKPWIQKHTGRARQGS) form a disordered region.

The protein belongs to the universal ribosomal protein uL4 family. Part of the 50S ribosomal subunit.

Functionally, one of the primary rRNA binding proteins, this protein initially binds near the 5'-end of the 23S rRNA. It is important during the early stages of 50S assembly. It makes multiple contacts with different domains of the 23S rRNA in the assembled 50S subunit and ribosome. In terms of biological role, forms part of the polypeptide exit tunnel. The chain is Large ribosomal subunit protein uL4 from Thermosipho africanus (strain TCF52B).